Here is a 297-residue protein sequence, read N- to C-terminus: Bifunctional protein FolD (297 aa).

NADP(+) contacts are provided by residues 168 to 170 (GRG), threonine 195, and valine 236.

It belongs to the tetrahydrofolate dehydrogenase/cyclohydrolase family. Homodimer.

It carries out the reaction (6R)-5,10-methylene-5,6,7,8-tetrahydrofolate + NADP(+) = (6R)-5,10-methenyltetrahydrofolate + NADPH. The catalysed reaction is (6R)-5,10-methenyltetrahydrofolate + H2O = (6R)-10-formyltetrahydrofolate + H(+). It functions in the pathway one-carbon metabolism; tetrahydrofolate interconversion. Its function is as follows. Catalyzes the oxidation of 5,10-methylenetetrahydrofolate to 5,10-methenyltetrahydrofolate and then the hydrolysis of 5,10-methenyltetrahydrofolate to 10-formyltetrahydrofolate. The protein is Bifunctional protein FolD of Bifidobacterium animalis subsp. lactis (strain AD011).